The primary structure comprises 849 residues: Coiled-coil domain-containing protein 87 (849 aa).

The stretch at 387-415 (RHPAAGHRLEELEKMLRNLQEEEASGQWD) forms a coiled coil.

It belongs to the CCDC87 family.

In terms of biological role, plays a role in spermatogenesis, where it is important for normal sperm head morphology. Also required for the acrosome reaction and thus normal male fertility. The protein is Coiled-coil domain-containing protein 87 (CCDC87) of Homo sapiens (Human).